The primary structure comprises 228 residues: Tungstate uptake system permease protein TupB (228 aa).

Transmembrane regions (helical) follow at residues 25–45 (IIFL…AVSI), 65–85 (VLYS…AIGL), 102–122 (AMII…TYSL), 144–164 (VIIL…VTTF), and 203–223 (MAIA…AVIY). An ABC transmembrane type-1 domain is found at 26-222 (IFLSVFVSST…MISFAINAVI (197 aa)).

This sequence belongs to the binding-protein-dependent transport system permease family. The complex is composed of two ATP-binding proteins (TupC), two transmembrane proteins (TupB) and a solute-binding protein (TupA).

The protein resides in the cell membrane. Its function is as follows. Part of an ABC transporter complex involved in tungstate uptake. Probably responsible for the translocation of the substrate across the membrane. The polypeptide is Tungstate uptake system permease protein TupB (Peptoclostridium acidaminophilum (Eubacterium acidaminophilum)).